The following is a 310-amino-acid chain: MLDANKLQQAVDQAYTQFHSLNGGQNADYIPFLANVPGQLAVVAIVTCDGNVYSAGDSDYRFALESISKVCTLALALEDVGPQAVQDKIGADPTGLPFNSVIALELHGGKPLSPLVNAGAIATTSLINAENIEQRWQRILHIQQQLAGEQVALSDEVNQSEQTTNFHNRAIAWLLYSAGYLYCDAMEACDVYTRQCSTLINTVELATLGATLAAGGLNPLTHKRVLQADNVPYILAEMMMEGLYGRSGDWAYRVGLPGKSGVGGGILAVVPGVMGIAAFSPPLDEEGNSVRGQKMVASVAKQLGYNVFKG.

The substrate site is built by serine 66, asparagine 117, glutamate 161, asparagine 168, tyrosine 192, tyrosine 244, and valine 262.

This sequence belongs to the glutaminase family. As to quaternary structure, homotetramer.

The enzyme catalyses L-glutamine + H2O = L-glutamate + NH4(+). This chain is Glutaminase, found in Shigella boydii serotype 4 (strain Sb227).